Here is an 852-residue protein sequence, read N- to C-terminus: MKVARSKWTILIANILVPISILVFSSGFFPYKTLLTGFATHEHTIGGQIPPGVFDKVLLLQADFHASDFVYSQHSGFLFTQRLGGGFLIRSGAALPFTAYASAPTVTMPRLKAITTGSVPSFLDVILNIAEADTSSTLMHQDTWLAQLKAKGGKLVMYGDDTWLKLFPGMFHRADGTTSFFVSDFTEVDNNVTRHIPNELLQDDWSAFIMHYLGLDHIGHKAGPNSPYMITKQHEMDSVVSMVYTALEQEKHLKTTLFVLCGDHGMNEAGNHGGSSVGETSPALLFISPKFQRLETRNDSPTEEFSDLQYYHTVEQTDITPTLAGLLGLPIPLNSLGVFIPELLAMWDHGAKSIPLTSSSGPHRIHMLLENAKQLLGAVKGSFPSYSFEFDLMPVICSSQSLIDIERVQCAWFRVLETLNGSGANHDSEASSEIESALLLFLRNAQKLMSSAASDYDLIRLYVGLSISGFAISLTFFPAKRLLVNFAPAGMFLGFSILSYSTMMFASSYVEEEQQFWYWISMGWVVYLHVKYAGHFHGNSIQKSGPANGHWPFEPSLPWFGAAALAVSYRVLRRWNQTGQKFAAQPDITGSFFPSHQHTLWALLSLAASDSPELLGNSFLQPVAMLTDGMHLLYHARMVLCGISLLMIYSLYAGKARETTHKGRGKWPPSTIFHETLTLFLLMQSKVTNIPAFLVFRVQITILASMRLSTVEQTITSLLMQYVTFYAFGGSNAISSVDISNAYNGIGTYSVFIVGALTFISNWAAPIWWVSASRLLRSSQNREEKEAHVTILTLHMATILMSVMAACTTLRTHLFIWTVFSPKYLYTIAWAMINHIVVNVLGEIDWRLFMKR.

N-linked (GlcNAc...) asparagine glycans are attached at residues N191 and N420. The next 3 membrane-spanning stretches (helical) occupy residues L458–P478, F486–A506, and F516–F536. N-linked (GlcNAc...) asparagine glycosylation occurs at N576. Helical transmembrane passes span L632–Y652, T676–F696, T714–I734, S750–V770, A787–C807, and Y824–I844.

The protein belongs to the PIGG/PIGN/PIGO family. PIGG subfamily.

Its subcellular location is the endoplasmic reticulum membrane. It participates in glycolipid biosynthesis; glycosylphosphatidylinositol-anchor biosynthesis. In terms of biological role, ethanolamine phosphate transferase involved in glycosylphosphatidylinositol-anchor biosynthesis. Transfers ethanolamine phosphate to the GPI second mannose. The polypeptide is GPI ethanolamine phosphate transferase 2 (las21) (Aspergillus oryzae (strain ATCC 42149 / RIB 40) (Yellow koji mold)).